Reading from the N-terminus, the 175-residue chain is Peptide deformylase (175 aa).

Fe cation contacts are provided by C96 and H138. E139 is an active-site residue. Position 142 (H142) interacts with Fe cation.

The protein belongs to the polypeptide deformylase family. The cofactor is Fe(2+).

It carries out the reaction N-terminal N-formyl-L-methionyl-[peptide] + H2O = N-terminal L-methionyl-[peptide] + formate. Functionally, removes the formyl group from the N-terminal Met of newly synthesized proteins. Requires at least a dipeptide for an efficient rate of reaction. N-terminal L-methionine is a prerequisite for activity but the enzyme has broad specificity at other positions. In Rhodopseudomonas palustris (strain BisB18), this protein is Peptide deformylase.